The primary structure comprises 1547 residues: ABC multidrug transporter atrF (1547 aa).

2 disordered regions span residues 1–66 (MADG…RRGA) and 85–123 (TRSV…IDGD). The segment covering 10-19 (SATSTTMETN) has biased composition (polar residues). Residues 36 to 47 (SSSMTATSSELS) are compositionally biased toward low complexity. Over residues 51–66 (RWGERDQGEPVSRRGA) the composition is skewed to basic and acidic residues. Over residues 111 to 123 (KAIDEEDSTIDGD) the composition is skewed to acidic residues. Residues 197–439 (IPQLRFGKQP…FVNLGFHCPE (243 aa)) enclose the ABC transporter 1 domain. 2 N-linked (GlcNAc...) asparagine glycosylation sites follow: Asn-299 and Asn-363. 7 consecutive transmembrane segments (helical) span residues 552–572 (LYTK…LFYG), 586–606 (ALFF…MPAV), 635–655 (FPAI…MTGL), 657–677 (VTAS…FSIT), 698–718 (GIAL…QGLI), 722–742 (IWFG…AVLT), and 804–824 (FGVV…AAEF). The ABC transporter 2 domain maps to 892-1130 (FTWSNVEYTV…DVIKYFADRG (239 aa)). An N-linked (GlcNAc...) asparagine glycan is attached at Asn-905. An ATP-binding site is contributed by 928–935 (GASGAGKT). 2 N-linked (GlcNAc...) asparagine glycosylation sites follow: Asn-980 and Asn-999. 8 helical membrane-spanning segments follow: residues 1230-1250 (FVSV…GNSI), 1260-1280 (IFLI…KFYI), 1309-1329 (IPMA…PVGF), 1334-1354 (STAG…SSWG), 1356-1376 (WICA…FFFV), 1397-1417 (YWMY…SSIF), 1491-1511 (CFGI…FFIY), and 1520-1540 (FGMG…KGVF).

This sequence belongs to the ABC transporter superfamily. ABCG family. PDR (TC 3.A.1.205) subfamily.

It localises to the cell membrane. It carries out the reaction voriconazole(in) + ATP + H2O = voriconazole(out) + ADP + phosphate + H(+). The catalysed reaction is fluconazole(in) + ATP + H2O = fluconazole(out) + ADP + phosphate + H(+). In terms of biological role, pleiotropic ABC efflux transporter involved in the basal level of azole susceptibility. Confers resistance to fluconazole and voriconazole. The protein is ABC multidrug transporter atrF of Aspergillus fumigatus (strain ATCC MYA-4609 / CBS 101355 / FGSC A1100 / Af293) (Neosartorya fumigata).